The chain runs to 521 residues: Bifunctional purine biosynthesis protein PurH (521 aa).

The region spanning 1–147 is the MGS-like domain; that stretch reads MAKITRALIS…KNNADVTVVV (147 aa).

It belongs to the PurH family.

It carries out the reaction (6R)-10-formyltetrahydrofolate + 5-amino-1-(5-phospho-beta-D-ribosyl)imidazole-4-carboxamide = 5-formamido-1-(5-phospho-D-ribosyl)imidazole-4-carboxamide + (6S)-5,6,7,8-tetrahydrofolate. The catalysed reaction is IMP + H2O = 5-formamido-1-(5-phospho-D-ribosyl)imidazole-4-carboxamide. The protein operates within purine metabolism; IMP biosynthesis via de novo pathway; 5-formamido-1-(5-phospho-D-ribosyl)imidazole-4-carboxamide from 5-amino-1-(5-phospho-D-ribosyl)imidazole-4-carboxamide (10-formyl THF route): step 1/1. Its pathway is purine metabolism; IMP biosynthesis via de novo pathway; IMP from 5-formamido-1-(5-phospho-D-ribosyl)imidazole-4-carboxamide: step 1/1. This is Bifunctional purine biosynthesis protein PurH from Geobacter metallireducens (strain ATCC 53774 / DSM 7210 / GS-15).